A 616-amino-acid chain; its full sequence is Dihydroxy-acid dehydratase (616 aa).

Residue D81 participates in Mg(2+) binding. A [2Fe-2S] cluster-binding site is contributed by C122. 2 residues coordinate Mg(2+): D123 and K124. K124 is subject to N6-carboxylysine. A [2Fe-2S] cluster-binding site is contributed by C195. E491 is a binding site for Mg(2+). S517 functions as the Proton acceptor in the catalytic mechanism.

Belongs to the IlvD/Edd family. Homodimer. [2Fe-2S] cluster serves as cofactor. The cofactor is Mg(2+).

The catalysed reaction is (2R)-2,3-dihydroxy-3-methylbutanoate = 3-methyl-2-oxobutanoate + H2O. The enzyme catalyses (2R,3R)-2,3-dihydroxy-3-methylpentanoate = (S)-3-methyl-2-oxopentanoate + H2O. The protein operates within amino-acid biosynthesis; L-isoleucine biosynthesis; L-isoleucine from 2-oxobutanoate: step 3/4. Its pathway is amino-acid biosynthesis; L-valine biosynthesis; L-valine from pyruvate: step 3/4. Functionally, functions in the biosynthesis of branched-chain amino acids. Catalyzes the dehydration of (2R,3R)-2,3-dihydroxy-3-methylpentanoate (2,3-dihydroxy-3-methylvalerate) into 2-oxo-3-methylpentanoate (2-oxo-3-methylvalerate) and of (2R)-2,3-dihydroxy-3-methylbutanoate (2,3-dihydroxyisovalerate) into 2-oxo-3-methylbutanoate (2-oxoisovalerate), the penultimate precursor to L-isoleucine and L-valine, respectively. The polypeptide is Dihydroxy-acid dehydratase (Escherichia coli O157:H7 (strain EC4115 / EHEC)).